Reading from the N-terminus, the 161-residue chain is 2-C-methyl-D-erythritol 2,4-cyclodiphosphate synthase (161 aa).

The a divalent metal cation site is built by aspartate 8 and histidine 10. 4-CDP-2-C-methyl-D-erythritol 2-phosphate-binding positions include 8 to 10 (DLH) and 34 to 35 (HS). Residue histidine 42 participates in a divalent metal cation binding. Residues 56 to 58 (DIG), 100 to 106 (AEYPKML), and arginine 142 each bind 4-CDP-2-C-methyl-D-erythritol 2-phosphate.

Belongs to the IspF family. In terms of assembly, homotrimer. A divalent metal cation serves as cofactor.

The catalysed reaction is 4-CDP-2-C-methyl-D-erythritol 2-phosphate = 2-C-methyl-D-erythritol 2,4-cyclic diphosphate + CMP. It functions in the pathway isoprenoid biosynthesis; isopentenyl diphosphate biosynthesis via DXP pathway; isopentenyl diphosphate from 1-deoxy-D-xylulose 5-phosphate: step 4/6. Involved in the biosynthesis of isopentenyl diphosphate (IPP) and dimethylallyl diphosphate (DMAPP), two major building blocks of isoprenoid compounds. Catalyzes the conversion of 4-diphosphocytidyl-2-C-methyl-D-erythritol 2-phosphate (CDP-ME2P) to 2-C-methyl-D-erythritol 2,4-cyclodiphosphate (ME-CPP) with a corresponding release of cytidine 5-monophosphate (CMP). The sequence is that of 2-C-methyl-D-erythritol 2,4-cyclodiphosphate synthase from Buchnera aphidicola subsp. Acyrthosiphon pisum (strain 5A).